The primary structure comprises 217 residues: uncharacterized protein (217 aa).

This is an uncharacterized protein from Acidianus sp. F28 (AFV-2).